The following is a 285-amino-acid chain: 2-dehydro-3-deoxyphosphooctonate aldolase (285 aa).

Belongs to the KdsA family.

It is found in the cytoplasm. The catalysed reaction is D-arabinose 5-phosphate + phosphoenolpyruvate + H2O = 3-deoxy-alpha-D-manno-2-octulosonate-8-phosphate + phosphate. Its pathway is carbohydrate biosynthesis; 3-deoxy-D-manno-octulosonate biosynthesis; 3-deoxy-D-manno-octulosonate from D-ribulose 5-phosphate: step 2/3. It participates in bacterial outer membrane biogenesis; lipopolysaccharide biosynthesis. This is 2-dehydro-3-deoxyphosphooctonate aldolase from Acinetobacter baylyi (strain ATCC 33305 / BD413 / ADP1).